A 1058-amino-acid polypeptide reads, in one-letter code: Carbamoyl phosphate synthase large chain (1058 aa).

The carboxyphosphate synthetic domain stretch occupies residues 1-401 (MAKRTDIKKI…CLLKACRSLE (401 aa)). Residues Arg-129, Arg-169, Gly-175, Gly-176, Arg-208, Ile-210, Glu-215, Gly-241, Ile-242, His-243, Gln-284, and Glu-298 each contribute to the ATP site. In terms of domain architecture, ATP-grasp 1 spans 133 to 327 (KQLMKELGEP…IAKIAAKIAV (195 aa)). Mg(2+)-binding residues include Gln-284, Glu-298, and Asn-300. Mn(2+) is bound by residues Gln-284, Glu-298, and Asn-300. The segment at 402 to 546 (IGVHHNELKG…YSTYEWENES (145 aa)) is oligomerization domain. The segment at 547-929 (IKSEKESVIV…ALYKAFEASY (383 aa)) is carbamoyl phosphate synthetic domain. The ATP-grasp 2 domain occupies 671–861 (EKALKELGIP…MAQVATKLIL (191 aa)). The ATP site is built by Arg-707, Ser-746, Ile-748, Glu-752, Gly-777, Val-778, His-779, Ser-780, Gln-820, and Glu-832. Mg(2+)-binding residues include Gln-820, Glu-832, and Asn-834. 3 residues coordinate Mn(2+): Gln-820, Glu-832, and Asn-834. Residues 930–1058 (LHMPEYGTIV…ESRTFSIEAI (129 aa)) form the MGS-like domain. Residues 930–1058 (LHMPEYGTIV…ESRTFSIEAI (129 aa)) are allosteric domain.

The protein belongs to the CarB family. Composed of two chains; the small (or glutamine) chain promotes the hydrolysis of glutamine to ammonia, which is used by the large (or ammonia) chain to synthesize carbamoyl phosphate. Tetramer of heterodimers (alpha,beta)4. Mg(2+) serves as cofactor. The cofactor is Mn(2+).

It catalyses the reaction hydrogencarbonate + L-glutamine + 2 ATP + H2O = carbamoyl phosphate + L-glutamate + 2 ADP + phosphate + 2 H(+). It carries out the reaction hydrogencarbonate + NH4(+) + 2 ATP = carbamoyl phosphate + 2 ADP + phosphate + 2 H(+). It participates in amino-acid biosynthesis; L-arginine biosynthesis; carbamoyl phosphate from bicarbonate: step 1/1. Its pathway is pyrimidine metabolism; UMP biosynthesis via de novo pathway; (S)-dihydroorotate from bicarbonate: step 1/3. Large subunit of the glutamine-dependent carbamoyl phosphate synthetase (CPSase). CPSase catalyzes the formation of carbamoyl phosphate from the ammonia moiety of glutamine, carbonate, and phosphate donated by ATP, constituting the first step of 2 biosynthetic pathways, one leading to arginine and/or urea and the other to pyrimidine nucleotides. The large subunit (synthetase) binds the substrates ammonia (free or transferred from glutamine from the small subunit), hydrogencarbonate and ATP and carries out an ATP-coupled ligase reaction, activating hydrogencarbonate by forming carboxy phosphate which reacts with ammonia to form carbamoyl phosphate. The protein is Carbamoyl phosphate synthase large chain of Streptococcus equi subsp. equi (strain 4047).